The chain runs to 394 residues: Probable acetyl-CoA acyltransferase (394 aa).

C88 (acyl-thioester intermediate) is an active-site residue. Residues H349 and C378 each act as proton acceptor in the active site.

This sequence belongs to the thiolase-like superfamily. Thiolase family.

It is found in the cytoplasm. The catalysed reaction is 2 acetyl-CoA = acetoacetyl-CoA + CoA. The sequence is that of Probable acetyl-CoA acyltransferase from Staphylococcus epidermidis (strain ATCC 35984 / DSM 28319 / BCRC 17069 / CCUG 31568 / BM 3577 / RP62A).